The sequence spans 906 residues: Protein translocase subunit SecA (906 aa).

ATP-binding positions include Q86, 104–108, and D511; that span reads GEGKT. 2 stretches are compositionally biased toward basic and acidic residues: residues 853–865 and 877–888; these read HESV…RHDE and VRREGPKVKRND. Positions 853-906 are disordered; sequence HESVIDNNQRHDEDEQEEAPKVQQVRREGPKVKRNDPCPCGSGKKYKQCHSKVE. 4 residues coordinate Zn(2+): C890, C892, C901, and H902. Positions 896-906 are enriched in basic residues; that stretch reads KKYKQCHSKVE.

It belongs to the SecA family. Monomer and homodimer. Part of the essential Sec protein translocation apparatus which comprises SecA, SecYEG and auxiliary proteins SecDF-YajC and YidC. Requires Zn(2+) as cofactor.

The protein localises to the cell inner membrane. It localises to the cytoplasm. It carries out the reaction ATP + H2O + cellular proteinSide 1 = ADP + phosphate + cellular proteinSide 2.. Its function is as follows. Part of the Sec protein translocase complex. Interacts with the SecYEG preprotein conducting channel. Has a central role in coupling the hydrolysis of ATP to the transfer of proteins into and across the cell membrane, serving both as a receptor for the preprotein-SecB complex and as an ATP-driven molecular motor driving the stepwise translocation of polypeptide chains across the membrane. This Francisella tularensis subsp. tularensis (strain WY96-3418) protein is Protein translocase subunit SecA.